The sequence spans 449 residues: Streptomycin-6-phosphate phosphatase (449 aa).

Positions 1-32 (MRFAYGRLPWRRGAVLGSALLVLVTAPAASTA) are cleaved as a signal peptide. Asp50 provides a ligand contact to Mg(2+). Asp50 is a binding site for Zn(2+). The active-site Phosphoserine intermediate is the Ser99. Asp151 and Thr153 together coordinate Mg(2+). The segment at 268–290 (APGGTAPQRCATRNPGRPAGTPD) is disordered. Position 321 (Glu321) interacts with Mg(2+). Zn(2+) is bound by residues Asp326, His330, Asp368, His369, and His412.

It belongs to the alkaline phosphatase family. Mg(2+) is required as a cofactor. It depends on Zn(2+) as a cofactor.

It localises to the secreted. The enzyme catalyses streptomycin 6-phosphate + H2O = streptomycin + phosphate. The protein operates within antibiotic biosynthesis; streptomycin biosynthesis. Functionally, specifically cleaves both streptomycin-6-phosphate and, more slowly, streptomycin-3''-phosphate during the biosynthesis of streptomycin. This chain is Streptomycin-6-phosphate phosphatase (strK), found in Streptomyces griseus.